The chain runs to 1503 residues: Mitogen-activated protein kinase-binding protein 1 (1503 aa).

WD repeat units lie at residues Ser89 to Glu130, Glu133 to Ser174, Lys176 to Val214, Val271 to Thr310, Ala337 to Lys376, Tyr382 to Ser431, Asp472 to Lys511, Ala514 to Gln556, Glu560 to Gln601, Val609 to Leu648, Gly654 to Thr693, and Gly696 to Met735. Disordered regions lie at residues Arg745 to Ala817, Leu874 to Thr917, and Val951 to Ser1176. Residues Lys784–Leu796 show a composition bias toward acidic residues. Composition is skewed to polar residues over residues Cys905–Thr917 and Asp957–Thr972. The segment covering Asp1028–Gly1043 has biased composition (acidic residues). Basic and acidic residues predominate over residues Pro1058–Phe1068. Residues Ser1089–Gly1129 are compositionally biased toward polar residues. Ser1193 carries the phosphoserine modification. Disordered stretches follow at residues Gln1217–Asn1238 and Gln1369–Pro1391.

Can form homodimers (via C-terminus). Interacts (via C-terminus) with WDR62 (via C-terminus). Interacts with MAPK9. Interacts (via N-terminus) with NOD2; the interaction is enhanced in presence of muramyl dipeptide (MDP). Interacts with MAPK10. Ubiquitously expressed. Highest expression observed in brain.

The protein resides in the cytoplasm. It localises to the nucleus. It is found in the cytoskeleton. Its subcellular location is the spindle pole. Its function is as follows. Negative regulator of NOD2 function. It down-regulates NOD2-induced processes such as activation of NF-kappa-B signaling, IL8 secretion and antibacterial response. Involved in JNK signaling pathway. In Mus musculus (Mouse), this protein is Mitogen-activated protein kinase-binding protein 1 (Mapkbp1).